The following is a 218-amino-acid chain: Glutathione S-transferase Mu 1 (218 aa).

The GST N-terminal domain maps to 2-88; the sequence is PMILGYWNVR…YLARKHHLCG (87 aa). Glutathione contacts are provided by residues 7-8, 43-46, K50, and 59-60; these read YW, RSQW, and NL. S67 bears the Phosphoserine mark. 72-73 contacts glutathione; the sequence is QS. A GST C-terminal domain is found at 90-208; that stretch reads TEEERIRADI…KSSRYLSTPI (119 aa). Y116 is a binding site for substrate. A phosphoserine mark is found at S205 and S210.

Belongs to the GST superfamily. Mu family. As to quaternary structure, homodimer or heterodimer.

It is found in the cytoplasm. It catalyses the reaction RX + glutathione = an S-substituted glutathione + a halide anion + H(+). The enzyme catalyses prostaglandin A2 + glutathione = prostaglandin A2-S-(R)-glutathione. The catalysed reaction is prostaglandin J2 + glutathione = prostaglandin J2-S-(R)-glutathione. It carries out the reaction prostaglandin J2 + glutathione = prostaglandin J2-S-(S)-glutathione. It catalyses the reaction prostaglandin A2 + glutathione = prostaglandin A2-S-(S)-glutathione. The enzyme catalyses 11(S)-hydroxy-14(S),15(S)-epoxy-(5Z,8Z,12E)-eicosatrienoate + glutathione = (11S,15S)-dihydroxy-14(R)-S-glutathionyl-(5Z,8Z,12E)-eicosatrienoate. Conjugation of reduced glutathione to a wide number of exogenous and endogenous hydrophobic electrophiles. The olfactory GST may be crucial for the acuity of the olfactory process. Participates in the formation of novel hepoxilin regioisomers. In Rattus norvegicus (Rat), this protein is Glutathione S-transferase Mu 1.